Here is a 72-residue protein sequence, read N- to C-terminus: Translation initiation factor IF-1 (72 aa).

Positions 1 to 72 (MAKEDVIEVE…TRGRITYRFK (72 aa)) constitute an S1-like domain.

Belongs to the IF-1 family. Component of the 30S ribosomal translation pre-initiation complex which assembles on the 30S ribosome in the order IF-2 and IF-3, IF-1 and N-formylmethionyl-tRNA(fMet); mRNA recruitment can occur at any time during PIC assembly.

It is found in the cytoplasm. Its function is as follows. One of the essential components for the initiation of protein synthesis. Stabilizes the binding of IF-2 and IF-3 on the 30S subunit to which N-formylmethionyl-tRNA(fMet) subsequently binds. Helps modulate mRNA selection, yielding the 30S pre-initiation complex (PIC). Upon addition of the 50S ribosomal subunit IF-1, IF-2 and IF-3 are released leaving the mature 70S translation initiation complex. This Listeria innocua serovar 6a (strain ATCC BAA-680 / CLIP 11262) protein is Translation initiation factor IF-1.